Consider the following 267-residue polypeptide: Glutamate racemase (267 aa).

Substrate is bound by residues 9–10 (DS) and 41–42 (YS). Cys73 acts as the Proton donor/acceptor in catalysis. 74 to 75 (NT) contacts substrate. Catalysis depends on Cys184, which acts as the Proton donor/acceptor. 185-186 (TH) lines the substrate pocket.

The protein belongs to the aspartate/glutamate racemases family.

It catalyses the reaction L-glutamate = D-glutamate. It participates in cell wall biogenesis; peptidoglycan biosynthesis. Functionally, provides the (R)-glutamate required for cell wall biosynthesis. The polypeptide is Glutamate racemase (Glaesserella parasuis serovar 5 (strain SH0165) (Haemophilus parasuis)).